The following is a 119-amino-acid chain: Large ribosomal subunit protein uL18 (119 aa).

The interval 1–23 (MSQVDKAARRQKIKDRSRVSVQG) is disordered.

It belongs to the universal ribosomal protein uL18 family. As to quaternary structure, part of the 50S ribosomal subunit; part of the 5S rRNA/L5/L18/L25 subcomplex. Contacts the 5S and 23S rRNAs.

Functionally, this is one of the proteins that bind and probably mediate the attachment of the 5S RNA into the large ribosomal subunit, where it forms part of the central protuberance. The protein is Large ribosomal subunit protein uL18 of Chlorobium chlorochromatii (strain CaD3).